We begin with the raw amino-acid sequence, 337 residues long: Manganese-dependent ADP-ribose/CDP-alcohol diphosphatase (337 aa).

M1 is modified (N-acetylmethionine). Zn(2+) is bound by residues D25, Q27, D74, N110, H241, H278, and H280.

The protein belongs to the ADPRibase-Mn family. Monomer. Mg(2+) is required as a cofactor.

The catalysed reaction is CDP-choline + H2O = phosphocholine + CMP + 2 H(+). It carries out the reaction ADP-D-ribose + H2O = D-ribose 5-phosphate + AMP + 2 H(+). It catalyses the reaction CDP-glycerol + H2O = sn-glycerol 3-phosphate + CMP + 2 H(+). Hydrolyzes ADP-ribose, IDP-ribose, CDP-glycerol, CDP-choline and CDP-ethanolamine, but not other non-reducing ADP-sugars or CDP-glucose. May be involved in immune cell signaling as suggested by the second-messenger role of ADP-ribose, which activates TRPM2 as a mediator of oxidative/nitrosative stress. This chain is Manganese-dependent ADP-ribose/CDP-alcohol diphosphatase (ADPRM), found in Bos taurus (Bovine).